The sequence spans 88 residues: uncharacterized protein (88 aa).

The signal sequence occupies residues 1 to 25 (MRAAFWVGCAALLLSACSSEPVQQA).

This is an uncharacterized protein from Escherichia coli O6:H1 (strain CFT073 / ATCC 700928 / UPEC).